The following is a 561-amino-acid chain: Methionine--tRNA ligase (561 aa).

Positions 11 to 21 match the 'HIGH' region motif; it reads PYVNTVPHLGN. 4 residues coordinate Zn(2+): Cys143, Cys146, Cys156, and Cys159. Lys334 is an ATP binding site.

This sequence belongs to the class-I aminoacyl-tRNA synthetase family. MetG type 1 subfamily. Requires Zn(2+) as cofactor.

Its subcellular location is the cytoplasm. The enzyme catalyses tRNA(Met) + L-methionine + ATP = L-methionyl-tRNA(Met) + AMP + diphosphate. Its function is as follows. Is required not only for elongation of protein synthesis but also for the initiation of all mRNA translation through initiator tRNA(fMet) aminoacylation. The protein is Methionine--tRNA ligase of Ignicoccus hospitalis (strain KIN4/I / DSM 18386 / JCM 14125).